Reading from the N-terminus, the 150-residue chain is Profilin (150 aa).

The protein belongs to the profilin family. As to quaternary structure, occurs in many kinds of cells as a complex with monomeric actin in a 1:1 ratio.

Its subcellular location is the cytoplasm. It is found in the cytoskeleton. Functionally, binds to actin and affects the structure of the cytoskeleton. At high concentrations, profilin prevents the polymerization of actin, whereas it enhances it at low concentrations. By binding to PIP2, it inhibits the formation of IP3 and DG. The sequence is that of Profilin from Trypanosoma brucei brucei.